A 398-amino-acid chain; its full sequence is Bifunctional enzyme IspD/IspF (398 aa).

Residues 1–234 form a 2-C-methyl-D-erythritol 4-phosphate cytidylyltransferase region; it reads MPNPPRTAAI…SRLTALLGDI (234 aa). The interval 235-398 is 2-C-methyl-D-erythritol 2,4-cyclodiphosphate synthase; it reads RTGTGYDVHA…LPWGAEGLAG (164 aa). Asp241 and His243 together coordinate a divalent metal cation. 4-CDP-2-C-methyl-D-erythritol 2-phosphate is bound by residues 241–243 and 267–268; these read DVH and HS. His275 lines the a divalent metal cation pocket. 4-CDP-2-C-methyl-D-erythritol 2-phosphate is bound by residues 289–291, 365–368, Phe372, and Arg375; these read DIG and TTSE.

It in the N-terminal section; belongs to the IspD/TarI cytidylyltransferase family. IspD subfamily. In the C-terminal section; belongs to the IspF family. The cofactor is a divalent metal cation.

It catalyses the reaction 2-C-methyl-D-erythritol 4-phosphate + CTP + H(+) = 4-CDP-2-C-methyl-D-erythritol + diphosphate. It carries out the reaction 4-CDP-2-C-methyl-D-erythritol 2-phosphate = 2-C-methyl-D-erythritol 2,4-cyclic diphosphate + CMP. It participates in isoprenoid biosynthesis; isopentenyl diphosphate biosynthesis via DXP pathway; isopentenyl diphosphate from 1-deoxy-D-xylulose 5-phosphate: step 2/6. It functions in the pathway isoprenoid biosynthesis; isopentenyl diphosphate biosynthesis via DXP pathway; isopentenyl diphosphate from 1-deoxy-D-xylulose 5-phosphate: step 4/6. Its function is as follows. Bifunctional enzyme that catalyzes the formation of 4-diphosphocytidyl-2-C-methyl-D-erythritol from CTP and 2-C-methyl-D-erythritol 4-phosphate (MEP) (IspD), and catalyzes the conversion of 4-diphosphocytidyl-2-C-methyl-D-erythritol 2-phosphate (CDP-ME2P) to 2-C-methyl-D-erythritol 2,4-cyclodiphosphate (ME-CPP) with a corresponding release of cytidine 5-monophosphate (CMP) (IspF). This is Bifunctional enzyme IspD/IspF from Rhodopseudomonas palustris (strain BisB5).